Reading from the N-terminus, the 187-residue chain is Peptidyl-tRNA hydrolase (187 aa).

A tRNA-binding site is contributed by tyrosine 14. Histidine 19 serves as the catalytic Proton acceptor. Positions 64 and 66 each coordinate tRNA.

This sequence belongs to the PTH family. In terms of assembly, monomer.

It localises to the cytoplasm. The enzyme catalyses an N-acyl-L-alpha-aminoacyl-tRNA + H2O = an N-acyl-L-amino acid + a tRNA + H(+). In terms of biological role, hydrolyzes ribosome-free peptidyl-tRNAs (with 1 or more amino acids incorporated), which drop off the ribosome during protein synthesis, or as a result of ribosome stalling. Catalyzes the release of premature peptidyl moieties from peptidyl-tRNA molecules trapped in stalled 50S ribosomal subunits, and thus maintains levels of free tRNAs and 50S ribosomes. The protein is Peptidyl-tRNA hydrolase of Carboxydothermus hydrogenoformans (strain ATCC BAA-161 / DSM 6008 / Z-2901).